The chain runs to 383 residues: Envelope glycoprotein D (383 aa).

Residues 1-30 (MPAATMATPGYLACRTSVATLLFFVLLRRA) form the signal peptide. Residues 31–358 (AILGAGGAPS…PKVVGPTVGP (328 aa)) are Virion surface-facing. 3 disulfide bridges follow: C76-C197, C115-C212, and C127-C136. Residues 244–311 (YQDKLKVASP…TSASGVIEIE (68 aa)) form a profusion region. The disordered stretch occupies residues 315-349 (ESDVRLVSYPPPTLPSPGPGGNENGAGYSDNRPDP). Residues 323–332 (YPPPTLPSPG) are compositionally biased toward pro residues. The helical transmembrane segment at 359–379 (GAIILVVMCAPILIGLTAFTI) threads the bilayer. The Intravirion portion of the chain corresponds to 380 to 383 (RKYC).

Belongs to the herpesviridae glycoprotein D family.

The protein localises to the virion membrane. In terms of biological role, envelope glycoprotein that binds to host cell entry receptors, promoting the virus entry into host cells. May trigger fusion with host membrane, by recruiting the fusion machinery composed of gB and gH/gL. In Amazona oratrix (yellow-headed parrot), this protein is Envelope glycoprotein D (US6).